Here is a 319-residue protein sequence, read N- to C-terminus: Annexin A4 (319 aa).

Threonine 7 bears the Phosphothreonine mark. A Phosphoserine modification is found at serine 12. 4 Annexin repeats span residues 14 to 85, 86 to 157, 169 to 241, and 245 to 316; these read FNAT…GMMT, PTVL…SLTA, ALVR…AIVK, and NKPA…ILCG. Lysine 213, lysine 293, and lysine 300 each carry N6-acetyllysine.

Belongs to the annexin family.

It is found in the zymogen granule membrane. Functionally, calcium/phospholipid-binding protein which promotes membrane fusion and is involved in exocytosis. The chain is Annexin A4 (Anxa4) from Rattus norvegicus (Rat).